The following is a 1377-amino-acid chain: Neogenin (1377 aa).

A signal peptide spans 1 to 2 (AA). The Extracellular portion of the chain corresponds to 3–1074 (AKNGSPPQSA…PTSPLDSNML (1072 aa)). Ig-like C2-type domains are found at residues 21 to 114 (PLYF…RTAK), 121 to 206 (PRFT…EAEL), 198 to 305 (PKFS…AELT), and 310 to 395 (PEFL…AQLI). N-linked (GlcNAc...) asparagine glycosylation occurs at Asn42. Disulfide bonds link Cys43–Cys98, Cys142–Cys190, and Cys239–Cys289. An N-linked (GlcNAc...) asparagine glycan is attached at Asn179. An N-linked (GlcNAc...) asparagine glycan is attached at Asn295. An intrachain disulfide couples Cys331 to Cys379. Fibronectin type-III domains are found at residues 410-504 (APRD…TQPE), 510-600 (PAPN…TLSD), 605-700 (APQN…TFES), 710-800 (VPSS…RPHT), 825-924 (PPVG…LVPT), and 926-1023 (PPKD…TPKA). N-linked (GlcNAc...) asparagine glycans are attached at residues Asn439 and Asn458. 2 N-linked (GlcNAc...) asparagine glycosylation sites follow: Asn608 and Asn684. Asn878 carries an N-linked (GlcNAc...) asparagine glycan. A disordered region spans residues 1010–1066 (GPMSEAVQFRTPKADSSDKMPNDQALGSAGKGGRLPDLGSDYKPPMSGSNSPHGSPT). Basic and acidic residues predominate over residues 1021–1030 (PKADSSDKMP). Residues 1056-1066 (SGSNSPHGSPT) are compositionally biased toward polar residues. The helical transmembrane segment at 1075-1095 (LVIIVSIGVITIVVVVIIAVF) threads the bilayer. Over 1096 to 1377 (CTRRTTSHQK…MKDLNAITTA (282 aa)) the chain is Cytoplasmic. The segment at 1143–1281 (PIDKSPDPNP…SHPLKSFAVP (139 aa)) is disordered. Residues Ser1147 and Ser1163 each carry the phosphoserine modification. Composition is skewed to polar residues over residues 1160–1176 (PRNS…MDSN), 1213–1238 (QPPQ…TCCT), and 1246–1265 (ATSS…QSLP). At Thr1167 the chain carries Phosphothreonine. Ser1317 bears the Phosphoserine mark. A Phosphothreonine modification is found at Thr1320. A phosphoserine mark is found at Ser1348, Ser1350, and Ser1351.

The protein belongs to the immunoglobulin superfamily. DCC family. As to quaternary structure, interacts with MYO10. Interacts with RGMA and RGMB. Interacts with BMP2, BMP4, BMP6, and BMP7.

The protein resides in the cell membrane. Multi-functional cell surface receptor regulating cell adhesion in many diverse developmental processes, including neural tube and mammary gland formation, myogenesis and angiogenesis. Receptor for members of the BMP, netrin, and repulsive guidance molecule (RGM) families. Netrin-Neogenin interactions result in a chemoattractive axon guidance response and cell-cell adhesion, the interaction between NEO1/Neogenin and RGMa and RGMb induces a chemorepulsive response. This is Neogenin (Neo1) from Rattus norvegicus (Rat).